The primary structure comprises 217 residues: Small ribosomal subunit protein uS3c (217 aa).

Residues 46-117 form the KH type-2 domain; that stretch reads VQKHIKNSSN…RLRMTLIEIA (72 aa).

It belongs to the universal ribosomal protein uS3 family. Part of the 30S ribosomal subunit.

It is found in the plastid. It localises to the chloroplast. The sequence is that of Small ribosomal subunit protein uS3c (rps3) from Marchantia polymorpha (Common liverwort).